Consider the following 1617-residue polypeptide: ATP-binding cassette sub-family A member 6 (1617 aa).

A helical membrane pass occupies residues 31-51 (LLEWGLSILLGLCIALFSSSM). N-linked (GlcNAc...) asparagine glycans are attached at residues N84 and N109. The next 6 membrane-spanning stretches (helical) occupy residues 222-242 (MFIL…SLNV), 268-288 (GLIY…IITF), 297-317 (FMVI…LVFL), 327-347 (LTNL…FTVF), 355-375 (LEWI…IQII), and 397-417 (IATF…ALYF). Residues 478–713 (IRIRNVKKEY…WGLGYHLSLH (236 aa)) form the ABC transporter 1 domain. 514–521 (GHSGAGKS) lines the ATP pocket. A helical membrane pass occupies residues 854–874 (VLLTLLLVFGIAIFPLIVENI). The N-linked (GlcNAc...) asparagine glycan is linked to N940. 6 helical membrane passes run 1007–1027 (IGLW…LCSI), 1062–1082 (ALVD…IFYI), 1094–1114 (IVFA…FFIY), 1127–1147 (SGLW…ITLI), 1150–1170 (FDLS…LLGF), and 1194–1214 (ATDF…VFVL). The 226-residue stretch at 1288-1513 (GQKKSCFSKR…LGKDYILELK (226 aa)) folds into the ABC transporter 2 domain. Position 1320 to 1327 (1320 to 1327 (GPNGAGKS)) interacts with ATP.

It belongs to the ABC transporter superfamily. ABCA family. Widely expressed with higher expression in liver.

Its subcellular location is the golgi apparatus membrane. Functionally, probable transporter which may play a role in macrophage lipid transport and homeostasis. The chain is ATP-binding cassette sub-family A member 6 (ABCA6) from Homo sapiens (Human).